The primary structure comprises 710 residues: Solute carrier organic anion transporter family member 3A1 (710 aa).

Position 1 is an N-acetylmethionine (M1). Over residues 1 to 15 the composition is skewed to gly residues; the sequence is MQGKKPGGSSGGGRS. The tract at residues 1–25 is disordered; the sequence is MQGKKPGGSSGGGRSGELQGDEAQR. Over 1-40 the chain is Cytoplasmic; that stretch reads MQGKKPGGSSGGGRSGELQGDEAQRNKKKKKKVSCFSNIK. A helical transmembrane segment spans residues 41-60; it reads IFLVSECALMLAQGTVGAYL. At 61–79 the chain is on the extracellular side; it reads VSVLTTLERRFNLQSADVG. The helical transmembrane segment at 80–100 threads the bilayer; it reads VIASSFEIGNLALILFVSYFG. Residues 101–106 are Cytoplasmic-facing; the sequence is ARGHRP. Residues 107-131 traverse the membrane as a helical segment; that stretch reads RLIGCGGIVMALGALLSALPEFLTH. At 132–174 the chain is on the extracellular side; the sequence is QYKYEAGEIRWGAEGRDVCAANGSGGDEGPDPDLICRNRTATN. N-linked (GlcNAc...) asparagine glycans are attached at residues N153 and N169. Residues 175–203 form a helical membrane-spanning segment; sequence MMYLLLIGAQVLLGIGATPVQPLGVSYID. The Cytoplasmic portion of the chain corresponds to 204 to 222; sequence DHVRRKDSSLYIGILFTML. A helical membrane pass occupies residues 223-243; sequence VFGPACGFILGSFCTKIYVDA. Topologically, residues 244–261 are extracellular; the sequence is VFIDTSNLDITPDDPRWI. Residues 262–286 traverse the membrane as a helical segment; that stretch reads GAWWGGFLLCGALLFFSSLLMFGFP. At 287 to 344 the chain is on the cytoplasmic side; that stretch reads QSLPPHSEPAMESEQAMLSEREYERPKPSNGVLRHPLEPDSSASCFQQLRVIPKVTKH. A helical membrane pass occupies residues 345–366; that stretch reads LLSNPVFTCIILAACMEIAVVA. At 367 to 386 the chain is on the extracellular side; the sequence is GFAAFLGKYLEQQFNLTTSS. An N-linked (GlcNAc...) asparagine glycan is attached at N381. Residues 387 to 410 form a helical membrane-spanning segment; it reads ANQLLGMTAIPCACLGIFLGGLLV. Topologically, residues 411–414 are cytoplasmic; it reads KKLS. Residues 415–438 form a helical membrane-spanning segment; that stretch reads LSALGAIRMAMLVNLVSTACYVSF. Over 439-539 the chain is Extracellular; sequence LFLGCDTGPV…PGCQEAFLTF (101 aa). An N-linked (GlcNAc...) asparagine glycan is attached at N457. One can recognise a Kazal-like domain in the interval 465–513; sequence LDPYSPCNNNCECQTDSFTPVCGADGITYLSACFAGCNSTNLTGCACLT. 3 disulfide bridges follow: C471-C501, C477-C497, and C486-C511. 3 N-linked (GlcNAc...) asparagine glycosylation sites follow: N502, N505, and N519. Residues 540–562 form a helical membrane-spanning segment; the sequence is LCVMCICSLIGAMAQTPSVIILI. Residues 563–571 are Cytoplasmic-facing; that stretch reads RTVSPELKS. A helical transmembrane segment spans residues 572 to 597; it reads YALGVLFLLLRLLGFIPPPLIFGAGI. Residues 598 to 630 lie on the Extracellular side of the membrane; it reads DSTCLFWSTFCGEQGACVLYDNVVYRYLYVSIA. A helical membrane pass occupies residues 631–648; it reads IALKSFAFILYTTTWQCL. The Cytoplasmic segment spans residues 649–705; it reads RKNYKRYIKNHEGGLSTSEFFASTLTLDNLGRDPVPANQTHRTKFIYNLEDHEWCEN.

Belongs to the organo anion transporter (TC 2.A.60) family. As to expression, generally the expression of isoform 1 is higher than that of isoform 2. Expressed in placental trophoblasts. Expressed in pancreas, kidney, liver, lung, brain, heart, cerebellum, peripheral blood leukocyte, colon, small intestine, ovary, testis, prostate, thyroid, thymus and spleen. Expressed in fetal brain, heart, kidney, liver, lung, skeletal muscle, spleen and pancreas. In testis, detected in spermatogonia at different stages and absent from Sertoli cells. Expressed in the choroid plexus epithelium, at the basolateral membrane. In brain, also very abundant in the gray matter of the frontal cortex, but not associated with neuronal cell bodies. Not detected in the white matter. In terms of tissue distribution, expressed in heart, brain, cerebellum, testis, lung, thyroid, spoleen and liver. In testis, primarily localized to the basal membrane of Sertoli cells and weakly expressed within the tubules. In testis, also present in spermatogonia at different stages. In brain, expressed in the choroid plexus epithelium, at the apical membrane as well as in the subapical intracellular vesicular compartments. In brain, also associated with neuronal bodies and axons in both the gray and the white matters of the frontal cortex.

The protein localises to the basolateral cell membrane. It localises to the apical cell membrane. It is found in the basal cell membrane. It catalyses the reaction L-thyroxine(out) = L-thyroxine(in). It carries out the reaction prostaglandin E1(out) = prostaglandin E1(in). The enzyme catalyses prostaglandin E2(out) = prostaglandin E2(in). The catalysed reaction is prostaglandin F2alpha(out) = prostaglandin F2alpha(in). It catalyses the reaction (5Z,8Z,11Z,14Z)-eicosatetraenoate(out) = (5Z,8Z,11Z,14Z)-eicosatetraenoate(in). It carries out the reaction taurocholate(out) = taurocholate(in). The enzyme catalyses glycocholate(out) = glycocholate(in). The catalysed reaction is estrone 3-sulfate(out) = estrone 3-sulfate(in). It catalyses the reaction argipressin(out) = argipressin(in). Its activity is regulated as follows. Stimulated by extracellular acidic pH. Functionally, putative organic anion antiporter with apparent broad substrate specificity. Recognizes various substrates including thyroid hormone L-thyroxine, prostanoids such as prostaglandin E1 and E2, bile acids such as taurocholate, glycolate and glycochenodeoxycholate and peptide hormones such as L-arginine vasopressin, likely operating in a tissue-specific manner. The transport mechanism, its electrogenicity and potential tissue-specific counterions remain to be elucidated. This chain is Solute carrier organic anion transporter family member 3A1 (SLCO3A1), found in Homo sapiens (Human).